The sequence spans 239 residues: tRNA1(Val) (adenine(37)-N6)-methyltransferase (239 aa).

The protein belongs to the methyltransferase superfamily. tRNA (adenine-N(6)-)-methyltransferase family.

Its subcellular location is the cytoplasm. It carries out the reaction adenosine(37) in tRNA1(Val) + S-adenosyl-L-methionine = N(6)-methyladenosine(37) in tRNA1(Val) + S-adenosyl-L-homocysteine + H(+). Specifically methylates the adenine in position 37 of tRNA(1)(Val) (anticodon cmo5UAC). In Vibrio campbellii (strain ATCC BAA-1116), this protein is tRNA1(Val) (adenine(37)-N6)-methyltransferase.